A 216-amino-acid chain; its full sequence is V-type ATP synthase subunit D (216 aa).

The protein belongs to the V-ATPase D subunit family.

In terms of biological role, produces ATP from ADP in the presence of a proton gradient across the membrane. This chain is V-type ATP synthase subunit D, found in Clostridium novyi (strain NT).